A 145-amino-acid chain; its full sequence is Protein ImpA (145 aa).

Active-site for autocatalytic cleavage activity residues include Ser-64 and Lys-101.

This sequence belongs to the peptidase S24 family.

In terms of biological role, involved in UV protection and mutation. The polypeptide is Protein ImpA (Escherichia coli).